We begin with the raw amino-acid sequence, 92 residues long: Sperm-specific protein Phi-1 (92 aa).

Residues 1-92 (MPSPTRRSSK…RVRAKKKKKK (92 aa)) are disordered. Composition is skewed to basic residues over residues 7–19 (RSSK…RSRS) and 29–92 (AAKR…KKKK).

In terms of tissue distribution, sperm.

The protein localises to the nucleus. The protein resides in the chromosome. Involved in nuclear basic protein transition: histones are replaced by spermatid specific proteins which are themselves replaced by protamines in late spermatids. The protein is Sperm-specific protein Phi-1 of Mytilus edulis (Blue mussel).